We begin with the raw amino-acid sequence, 130 residues long: Small ribosomal subunit protein uS11 (130 aa).

Belongs to the universal ribosomal protein uS11 family. In terms of assembly, part of the 30S ribosomal subunit. Interacts with proteins S7 and S18. Binds to IF-3.

In terms of biological role, located on the platform of the 30S subunit, it bridges several disparate RNA helices of the 16S rRNA. Forms part of the Shine-Dalgarno cleft in the 70S ribosome. This is Small ribosomal subunit protein uS11 from Buchnera aphidicola subsp. Cinara cedri (strain Cc).